The primary structure comprises 228 residues: Archaeal flagellar ATP-binding protein FlaH (228 aa).

Residues G30, T31, K33, S34, V35, E57, and K191 each contribute to the ATP site. Residue S34 coordinates Mg(2+). E57 contacts Mg(2+).

It belongs to the FlaH family. The S.acidocaldarius archaellum assembly machinery and its filament consist of seven proteins (FlaB, FlaF, FlaG, FlaH, FlaI, FlaJ and FlaX). Interacts directly with the FlaX ring and the motor ATPase FlaI. Monomers, which can probably form homohexamers upon binding to ATP. In vitro, FlaH assembles as a second ring inside the FlaX ring.

The protein localises to the archaeal flagellum. It is found in the cytoplasm. In terms of biological role, component of the archaellum. FlaX, FlaH and FlaI form the core cytoplasmic motor complex of the crenarchaeal archaellum. FlaH binds ATP with high affinity but lacks detectable in vitro ATPase activity. ATP binding is essential for interaction with FlaI and for archaellum assembly. The sequence is that of Archaeal flagellar ATP-binding protein FlaH from Sulfolobus acidocaldarius (strain ATCC 33909 / DSM 639 / JCM 8929 / NBRC 15157 / NCIMB 11770).